Reading from the N-terminus, the 72-residue chain is DNA-directed RNA polymerase subunit Rpo10 (72 aa).

The Zn(2+) site is built by Cys7, Cys10, Cys45, and Cys46.

It belongs to the archaeal Rpo10/eukaryotic RPB10 RNA polymerase subunit family. As to quaternary structure, part of the RNA polymerase complex. Zn(2+) is required as a cofactor.

The protein resides in the cytoplasm. The catalysed reaction is RNA(n) + a ribonucleoside 5'-triphosphate = RNA(n+1) + diphosphate. In terms of biological role, DNA-dependent RNA polymerase (RNAP) catalyzes the transcription of DNA into RNA using the four ribonucleoside triphosphates as substrates. The chain is DNA-directed RNA polymerase subunit Rpo10 from Methanopyrus kandleri (strain AV19 / DSM 6324 / JCM 9639 / NBRC 100938).